We begin with the raw amino-acid sequence, 669 residues long: MQAIQDEIKQLTDELNQHNYRYYVDDAPSIPDAEYDRLMRRLQELEAEHPELALADSPTQRVGGEALSKFNQVTHLKPMLSLDNVFSEEEFNAFYKRVGDKLPDTPAFCCEPKLDGLAVSILYRDGVFERAATRGDGTVGEDITENVRTIKSVPLRLRGSGFPPLLEVRGEVFMPKAAFEAVNDKARAKGEKLFVNPRNAAAGSLRQLDSKITASRSLAFYAYALGVVEPETWPLAASHFEQLVQLKEWGCPVSSEVKVCADIPSVLAYYQDILTRRSELAYEIDGVVLKVNDIAQQQTLGFVAKAPRWATAYKFPAQEEITQLEGVDFQVGRTGAVTPVARLQPVFVGGVTVSNATLHNADEIARLGVMIGDSVIIRRAGDVIPQVVAVVPEKRPSDAQAIQFPPQCPVCGSDVERVEGEAVARCTGGLVCEAQRKEAIKHFASRKALDIDGMGDKVVEQLIDKELVASPADLFKLTASAITMLDRMGMKSATNLVNALEAAKQTTFARFLYSLGIREVGEATAANLANYFKTLEHLKQADAETFMKVDDVGVIVAQHLVHFFEQPHNLEVIDGLLQAGVHWPDIEEVAEEALSLKGQTWVLTGTLTQLNRNDAKAKLQALGAKVAGSVSKNTDCLVAGEAAGSKLTKAQELGVKVIDEAELLAILGS.

NAD(+)-binding positions include 32-36 (DAEYD), 81-82 (SL), and glutamate 111. The active-site N6-AMP-lysine intermediate is the lysine 113. NAD(+) contacts are provided by arginine 134, glutamate 171, lysine 290, and lysine 314. Zn(2+) is bound by residues cysteine 408, cysteine 411, cysteine 426, and cysteine 432. The 79-residue stretch at 591–669 (EEALSLKGQT…EAELLAILGS (79 aa)) folds into the BRCT domain.

Belongs to the NAD-dependent DNA ligase family. LigA subfamily. It depends on Mg(2+) as a cofactor. The cofactor is Mn(2+).

The enzyme catalyses NAD(+) + (deoxyribonucleotide)n-3'-hydroxyl + 5'-phospho-(deoxyribonucleotide)m = (deoxyribonucleotide)n+m + AMP + beta-nicotinamide D-nucleotide.. Its function is as follows. DNA ligase that catalyzes the formation of phosphodiester linkages between 5'-phosphoryl and 3'-hydroxyl groups in double-stranded DNA using NAD as a coenzyme and as the energy source for the reaction. It is essential for DNA replication and repair of damaged DNA. This is DNA ligase from Shewanella loihica (strain ATCC BAA-1088 / PV-4).